The chain runs to 455 residues: UDP-glycosyltransferase 87A2 (455 aa).

Position 1 is an N-acetylmethionine (M1). Residues S278, 327–329 (CDQ), 344–352 (HCGFNSTLE), and 366–369 (FWDQ) each bind UDP-alpha-D-glucose.

This sequence belongs to the UDP-glycosyltransferase family.

This is UDP-glycosyltransferase 87A2 (UGT87A2) from Arabidopsis thaliana (Mouse-ear cress).